The chain runs to 88 residues: M-zodatoxin-Lt1a (88 aa).

An N-terminal signal peptide occupies residues 1-22 (MKYFVVALALAVALVCIAESTA). Positions 23–62 (YDVNEELENELDDLSDAAWLAKAAEDLQALDDFEESEESR) are excised as a propeptide. Positions 59–62 (EESR) match the Processing quadruplet motif motif.

In terms of processing, cleavage of the propeptide depends on the processing quadruplet motif (XXXR, with at least one of X being E). Expressed by the venom gland.

Its subcellular location is the secreted. Its function is as follows. Has antimicrobial activity against Gram-positive bacteria (A.globiformis VKM Ac-1112 (MIC=0.5 uM), and B.subtilis VKM B-501 (MIC=1.0 uM)), Gram-negative bacteria (E.coli DH5-alpha (MIC=1.0 uM), E.coli MH1 (MIC=0.7 uM), and P.aeruginosa PAO1 (MIC=4.1 uM)), and yeasts (P.pastoris GS115 (MIC=17 uM), and S.cerevisiae Y190 (MIC&gt;33 uM)). Has a moderate hemolytic activity against rabbit erythrocytes. Causes paralysis, but is not lethal when injected into insect (M.domestica) larvae. The chain is M-zodatoxin-Lt1a from Lachesana tarabaevi (Spider).